Here is an 874-residue protein sequence, read N- to C-terminus: Valine--tRNA ligase (874 aa).

The short motif at 46 to 56 is the 'HIGH' region element; the sequence is PNVTGHLHIGH. The 'KMSKS' region motif lies at 523–527; it reads KMSKS. K526 is an ATP binding site. Residues 805-874 are a coiled coil; the sequence is DYVFQMKKAS…TLTDLKQKVK (70 aa).

The protein belongs to the class-I aminoacyl-tRNA synthetase family. ValS type 1 subfamily. Monomer.

It localises to the cytoplasm. It carries out the reaction tRNA(Val) + L-valine + ATP = L-valyl-tRNA(Val) + AMP + diphosphate. Catalyzes the attachment of valine to tRNA(Val). As ValRS can inadvertently accommodate and process structurally similar amino acids such as threonine, to avoid such errors, it has a 'posttransfer' editing activity that hydrolyzes mischarged Thr-tRNA(Val) in a tRNA-dependent manner. This is Valine--tRNA ligase from Ureaplasma parvum serovar 3 (strain ATCC 700970).